Consider the following 263-residue polypeptide: Isoprenyl transferase (263 aa).

Residue Asp-38 is part of the active site. Position 38 (Asp-38) interacts with Mg(2+). Substrate is bound by residues 39–42, His-55, and 83–85; these read GNRR and STD. The Proton acceptor role is filled by Asn-86. Substrate-binding positions include Phe-87, Arg-89, Arg-212, and 218–220; that span reads RLS. Glu-231 contacts Mg(2+).

It belongs to the UPP synthase family. As to quaternary structure, homodimer. It depends on Mg(2+) as a cofactor.

Functionally, catalyzes the condensation of isopentenyl diphosphate (IPP) with allylic pyrophosphates generating different type of terpenoids. The sequence is that of Isoprenyl transferase from Thermus thermophilus (strain ATCC BAA-163 / DSM 7039 / HB27).